A 283-amino-acid chain; its full sequence is Pantothenate synthetase (283 aa).

ATP is bound at residue 30-37 (MGYLHEGH). The active-site Proton donor is the H37. Q61 contacts (R)-pantoate. Q61 serves as a coordination point for beta-alanine. 147 to 150 (GQKD) is a binding site for ATP. Q153 contributes to the (R)-pantoate binding site. ATP contacts are provided by residues V176 and 184–187 (LSSR).

It belongs to the pantothenate synthetase family. In terms of assembly, homodimer.

The protein localises to the cytoplasm. The catalysed reaction is (R)-pantoate + beta-alanine + ATP = (R)-pantothenate + AMP + diphosphate + H(+). It functions in the pathway cofactor biosynthesis; (R)-pantothenate biosynthesis; (R)-pantothenate from (R)-pantoate and beta-alanine: step 1/1. Its function is as follows. Catalyzes the condensation of pantoate with beta-alanine in an ATP-dependent reaction via a pantoyl-adenylate intermediate. This Moorella thermoacetica (strain ATCC 39073 / JCM 9320) protein is Pantothenate synthetase.